The sequence spans 308 residues: Tyrosine recombinase XerD (308 aa).

The Core-binding (CB) domain occupies 13-97; the sequence is PSSTEAIQRF…VFKRFFQWAL (85 aa). In terms of domain architecture, Tyr recombinase spans 118-302; sequence RVPKTLSEAQ…ARERLRTLHA (185 aa). Catalysis depends on residues R158, K183, H254, R257, and H280. Catalysis depends on Y289, which acts as the O-(3'-phospho-DNA)-tyrosine intermediate.

This sequence belongs to the 'phage' integrase family. XerD subfamily. As to quaternary structure, forms a cyclic heterotetrameric complex composed of two molecules of XerC and two molecules of XerD.

Its subcellular location is the cytoplasm. In terms of biological role, site-specific tyrosine recombinase, which acts by catalyzing the cutting and rejoining of the recombining DNA molecules. The XerC-XerD complex is essential to convert dimers of the bacterial chromosome into monomers to permit their segregation at cell division. It also contributes to the segregational stability of plasmids. This Ralstonia nicotianae (strain ATCC BAA-1114 / GMI1000) (Ralstonia solanacearum) protein is Tyrosine recombinase XerD.